Reading from the N-terminus, the 634-residue chain is Transmembrane and coiled-coil domain-containing protein 4 (634 aa).

A coiled-coil region spans residues 150-190; that stretch reads EELDVLEEMFLESLKEIKEEESEMAEASRKKKENRRKWKRY. A run of 3 helical transmembrane segments spans residues 203–223, 231–251, and 346–366; these read VIGVTGGLAAPLVAAGAATII, LGSAAGIAIMTSLFGAAGAGL, and LSGIVAALTWPASLLSVANVI. The tract at residues 542–612 is disordered; it reads EPRQAAAAAS…ERPPICSHGM (71 aa). Residues 552–583 show a composition bias toward polar residues; sequence SGETPHQVGQTQGPISGDTSKLAMSTDPSQAQ.

The protein belongs to the TMCO4 family.

The protein localises to the membrane. The chain is Transmembrane and coiled-coil domain-containing protein 4 (TMCO4) from Homo sapiens (Human).